A 145-amino-acid chain; its full sequence is MYKILCLSLLVAAVAADQVDIKDCANHEIKKVMVPGCKGSEPCVIHRGTAFQLEAVFDANQNSNAAKIEIKATIDGVEIDVPGIDNNLCHFMKCPLVKGQEYDIKYTWNVPRIAPKSENVVVTVKLLGDNGVLACAIATHAKIRD.

The first 16 residues, 1 to 16, serve as a signal peptide directing secretion; the sequence is MYKILCLSLLVAAVAA. 3 disulfide bridges follow: Cys-24–Cys-135, Cys-37–Cys-43, and Cys-89–Cys-94.

Belongs to the NPC2 family.

It is found in the secreted. The protein is Mite group 2 allergen Eur m 2 (EURM2) of Euroglyphus maynei (Mayne's house dust mite).